Reading from the N-terminus, the 1178-residue chain is Zinc finger CCHC domain-containing protein 2 (1178 aa).

Disordered stretches follow at residues 1–90 (MLRM…GPSA), 207–249 (AARG…RVGG), 557–683 (VTSA…SVNQ), and 936–986 (LSTA…SDST). Over residues 43-67 (PPPPPPPPAGPSRGPLPPPPPPRGL) the composition is skewed to pro residues. Gly residues predominate over residues 75-88 (AAAGAGMPGGGGGP). Over residues 208–219 (ARGEGSRGGAED) the composition is skewed to basic and acidic residues. Residues 220–229 (ERGEDGDGEQ) show a composition bias toward acidic residues. Ser236 carries the post-translational modification Phosphoserine. Over residues 580–594 (PQTEKEKIKKTDNRL) the composition is skewed to basic and acidic residues. A compositionally biased stretch (polar residues) spans 595 to 607 (NSRINGIRLSTPQ). Over residues 632-641 (SSESYSSPSS) the composition is skewed to low complexity. The segment covering 642–661 (PRHDGRESFESEEEKDRDTD) has biased composition (basic and acidic residues). Polar residues predominate over residues 665 to 683 (EDSGNPSTTRFTGYGSVNQ). The segment covering 937-948 (STAATSPQPASA) has biased composition (low complexity). Over residues 959–973 (PAVPTHTPGPAPSPS) the composition is skewed to pro residues. Residues 974-986 (PALTHSTAQSDST) are compositionally biased toward polar residues. The CCHC-type zinc-finger motif lies at 1131–1148 (VSCYNCGVSGHYAQDCKQ).

This chain is Zinc finger CCHC domain-containing protein 2, found in Homo sapiens (Human).